The following is a 3051-amino-acid chain: MATNPQPQPPPPAPPPPPPQPQPQPPPPPPGPGAGPGAGGAGGAGAGAGDPQLVAMIVNHLKSQGLFDQFRRDCLADVDTKPAYQNLRQRVDNFVANHLATHTWSPHLNKNQLRNNIRQQVLKSGMLESGIDRIISQVVDPKINHTFRPQVEKAVHEFLATLNHKEEGSGNTAPDDEKPDTSLITQGVPTPGPSANVANDAMSILETITSLNQEASAARASTETSNAKTSERASKKLPSQPTTDTSTDKERTSEDMADKEKSTADSGGEGLETAPKSEEFSDLPCPVEEIKNYTKEHNNLILLNKDVQQESSEQKNKSTDKGEKKPDSNEKGERKKEKKEKTEKKFDHSKKSEDTQKVKDEKQAKEKEVESLKLPSEKNSNKAKTVEGTKEDFSLIDSDVDGLTDITVSSVHTSDLSSFEEDTEEEVVTSDSMEEGEITSDDEEKNKQNKTKTQTSDSSEGKTKSVRHAYVHKPYLYSKYYSDSDDELTVEQRRQSIAKEKEERLLRRQINREKLEEKRKQKAEKTKSSKTKGQGRSSVDLEESSTKSLEPKAARIKEVLKERKVLEKKVALSKKRKKDSRNVEENSKKKQQYEEDSKETLKTSEHCEKEKISSSKELKHVHAKSEPSKPARRLSESLHVVDENKNESKLEREHKRRTSTPVIMEGVQEETDTRDVKRQVERSEICTEEPQKQKSTLKNEKHLKKDDSETPHLKSLLKKEVKSSKEKPEREKTPSEDKLSVKHKYKGDCMHKTGDETELHSSEKGLKVEENIQKQSQQTKLSSDDKTERKSKHRNERKLSVLGKDGKPVSEYIIKTDENVRKENNKKERRLSAEKTKAEHKSRRSSDSKIQKDSLGSKQHGITLQRRSESYSEDKCDMDSTNMDSNLKPEEVVHKEKRRTKSLLEEKLVLKSKSKTQGKQVKVVETELQEGATKQATTPKPDKEKNTEENDSEKQRKSKVEDKPFEETGVEPVLETASSSAHSTQKDSSHRAKLPLAKEKYKSDKDSTSTRLERKLSDGHKSRSLKHSSKDIKKKDENKSDDKDGKEVDSSHEKARGNSSLMEKKLSRRLCENRRGSLSQEMAKGEEKLAANTLSTPSGSSLQRPKKSGDMTLIPEQEPMEIDSEPGVENVFEVSKTQDNRNNNSQQDIDSENMKQKTSATVQKDELRTCTADSKATAPAYKPGRGTGVNSNSEKHADHRSTLTKKMHIQSAVSKMNPGEKEPIHRGTTEVNIDSETVHRMLLSAPSENDRVQKNLKNTAAEEHVAQGDATLEHSTNLDSSPSLSSVTVVPLRESYDPDVIPLFDKRTVLEGSTASTSPADHSALPNQSLTVRESEVLKTSDSKEGGEGFTVDTPAKASITSKRHIPEAHQATLLDGKQGKVIMPLGSKLTGVIVENENITKEGGLVDMAKKENDLNAEPNLKQTIKATVENGKKDGIAVDHVVGLNTEKYAETVKLKHKRSPGKVKDISIDVERRNENSEVDTSAGSGSAPSVLHQRNGQTEDVATGPRRAEKTSVATSTEGKDKDVTLSPVKAGPATTTSSETRQSEVALPCTSIEADEGLIIGTHSRNNPLHVGAEASECTVFAAAEEGGAVVTEGFAESETFLTSTKEGESGECAVAESEDRAADLLAVHAVKIEANVNSVVTEEKDDAVTSAGSEEKCDGSLSRDSEIVEGTITFISEVESDGAVTSAGTEIRAGSISSEEVDGSQGNMMRMGPKKETEGTVTCTGAEGRSDNFVICSVTGAGPREERMVTGAGVVLGDNDAPPGTSASQEGDGSVNDGTEGESAVTSTGITEDGEGPASCTGSEDSSEGFAISSESEENGESAMDSTVAKEGTNVPLVAAGPCDDEGIVTSTGAKEEDEEGEDVVTSTGRGNEIGHASTCTGLGEESEGVLICESAEGDSQIGTVVEHVEAEAGAAIMNANENNVDSMSGTEKGSKDTDICSSAKGIVESSVTSAVSGKDEVTPVPGGCEGPMTSAASDQSDSQLEKVEDTTISTGLVGGSYDVLVSGEVPECEVAHTSPSEKEDEDIITSVENEECDGLMATTASGDITNQNSLAGGKNQGKVLIISTSTTNDYTPQVSAITDVEGGLSDALRTEENMEGTRVTTEEFEAPMPSAVSGDDSQLTASRSEEKDECAMISTSIGEEFELPISSATTIKCAESLQPVAAAVEERATGPVLISTADFEGPMPSAPPEAESPLASTSKEEKDECALISTSIAEECEASVSGVVVESENERAGTVMEEKDGSGIISTSSVEDCEGPVSSAVPQEEGDPSVTPAEEMGDTAMISTSTSEGCEAVMIGAVLQDEDRLTITRVEDLSDAAIISTSTAECMPISASIDRHEENQLTADNPEGNGDLSATEVSKHKVPMPSLIAENNCRCPGPVRGGKEPGPVLAVSTEEGHNGPSVHKPSAGQGHPSAVCAEKEEKHGKECPEIGPFAGRGQKESTLHLINAEEKNVLLNSLQKEDKSPETGTAGGSSTASYSAGRGLEGNANSPAHLRGPEQTSGQTAKDPSVSIRYLAAVNTGAIKADDMPPVQGTVAEHSFLPAEQQGSEDNLKTSTTKCITGQESKIAPSHTMIPPATYSVALLAPKCEQDLTIKNDYSGKWTDQASAEKTGDDNSTRKSFPEEGDIMVTVSSEENVCDIGNEESPLNVLGGLKLKANLKMEAYVPSEEEKNGEILAPPESLCGGKPSGIAELQREPLLVNESLNVENSGFRTNEEIHSESYNKGEISSGRKDNAEAISGHSVEADPKEVEEEERHMPKRKRKQHYLSSEDEPDDNPDVLDSRIETAQRQCPETEPHDTKEENSRDLEELPKTSSETNSTTSRVMEEKDEYSSSETTGEKPEQNDDDTIKSQEEDQPIIIKRKRGRPRKYPVETTLKMKDDSKTDTGIVTVEQSPSSSKLKVMQTDESNKETANLQERSISNDDGEEKIVTSVRRRGRKPKRSLTVSDDAESSEPERKRQKSVSDPVEDKKEQESDEEEEEEEEDEPSGATTRSTTRSEAQRSKTQLSPSIKRKREVSPPGARTRGQQRVEEAPVKKAKR.

Residues methionine 1–glycine 33 are compositionally biased toward pro residues. 5 disordered regions span residues methionine 1–glycine 47, histidine 164–valine 197, alanine 215–glutamate 288, isoleucine 301–phenylalanine 393, and valine 411–alanine 469. The span at alanine 34–glycine 47 shows a compositional bias: gly residues. The span at alanine 215–alanine 227 shows a compositional bias: low complexity. The span at serine 246–threonine 263 shows a compositional bias: basic and acidic residues. The residue at position 266 (serine 266) is a Phosphoserine. Positions serine 312–phenylalanine 393 are enriched in basic and acidic residues. Residues serine 418–glutamate 443 are compositionally biased toward acidic residues. The residue at position 473 (lysine 473) is an N6-acetyllysine. Serine 482 and serine 484 each carry phosphoserine. Composition is skewed to basic and acidic residues over residues isoleucine 497 to lysine 527, leucine 549 to valine 570, and serine 580 to glutamate 653. Residues isoleucine 497–leucine 1203 form a disordered region. Serine 635 and serine 659 each carry phosphoserine. Residues threonine 660 and threonine 733 each carry the phosphothreonine modification. Basic and acidic residues-rich tracts occupy residues threonine 671–isoleucine 772, lysine 804–lysine 852, arginine 866–methionine 878, lysine 940–glutamate 966, threonine 984–lysine 1021, and serine 1028–arginine 1075. The residue at position 1077 (serine 1077) is a Phosphoserine. Composition is skewed to polar residues over residues asparagine 1092 to glutamine 1103 and serine 1135 to aspartate 1148. Serine 1145 and serine 1318 each carry phosphoserine. At threonine 1354 the chain carries Phosphothreonine. Disordered stretches follow at residues lysine 1456–valine 1550, glycine 1700–glycine 1725, and valine 1760–glycine 1890. The segment covering lysine 1465 to asparagine 1479 has biased composition (basic and acidic residues). Positions valine 1482–aspartate 1504 are enriched in polar residues. Phosphoserine occurs at positions 1531, 1701, and 1710. Phosphoserine is present on residues serine 2013, serine 2025, serine 2128, and serine 2203. Disordered regions lie at residues aspartate 2189 to lysine 2210, threonine 2258 to glutamate 2285, serine 2403 to arginine 2447, glutamate 2472 to proline 2519, aspartate 2615 to glutamate 2635, and valine 2717 to arginine 3051. Residues glutamate 2191–serine 2207 show a composition bias toward low complexity. Residues alanine 2428–proline 2439 show a composition bias toward basic and acidic residues. Residue serine 2475 is modified to Phosphoserine. Residues glycine 2483 to glycine 2492 are compositionally biased toward low complexity. Residues serine 2501 and serine 2618 each carry the phosphoserine modification. Composition is skewed to basic and acidic residues over residues lysine 2621–proline 2633, threonine 2724–alanine 2746, and valine 2754–histidine 2767. Residues serine 2780–aspartate 2789 are compositionally biased toward acidic residues. Basic and acidic residues predominate over residues leucine 2791–proline 2822. Residues lysine 2823–arginine 2834 show a composition bias toward polar residues. The span at threonine 2848–glutamate 2864 shows a compositional bias: basic and acidic residues. Positions isoleucine 2871–lysine 2880 are enriched in basic residues. Residues lysine 2872–glutamate 2884 constitute a DNA-binding region (a.T hook). Polar residues predominate over residues aspartate 2896 to lysine 2910. Phosphoserine occurs at positions 2905 and 2907. The segment covering valine 2944–arginine 2953 has biased composition (basic residues). Serine 2954 is modified (phosphoserine). At threonine 2956 the chain carries Phosphothreonine. Phosphoserine occurs at positions 2958, 2964, and 2973. Glycyl lysine isopeptide (Lys-Gly) (interchain with G-Cter in ubiquitin) cross-links involve residues lysine 2981 and lysine 2982. Residues glutamate 2985–proline 2998 are compositionally biased toward acidic residues. Residues serine 2986 and serine 3019 each carry the phosphoserine modification. Residues glycine 3000–proline 3020 show a composition bias toward polar residues. Residues glutamine 3039–arginine 3051 show a composition bias toward basic and acidic residues.

It belongs to the BOD1 family. As to quaternary structure, interacts (via COMPASS-Shg1 domain) with SETD1A at stalled replication forks; this interaction mediates FANCD2-dependent nucleosome remodeling at reversed forks protecting them from nucleolytic degradation.

The protein resides in the chromosome. Component of the fork protection machinery required to protect stalled/damaged replication forks from uncontrolled DNA2-dependent resection. Acts by stabilizing RAD51 at stalled replication forks and protecting RAD51 nucleofilaments from the antirecombinogenic activities of FBH1 and BLM. Does not regulate spindle orientation. In Homo sapiens (Human), this protein is Biorientation of chromosomes in cell division protein 1-like 1.